Reading from the N-terminus, the 226-residue chain is Ribonuclease 3 (226 aa).

Residues 7–129 (LPRLCRTLGY…IIGAVYLDSD (123 aa)) form the RNase III domain. Glu-42 lines the Mg(2+) pocket. Asp-46 is an active-site residue. Positions 115 and 118 each coordinate Mg(2+). Glu-118 is a catalytic residue. One can recognise a DRBM domain in the interval 156 to 226 (DAKTLLQEHL…AAQVLELLKK (71 aa)).

The protein belongs to the ribonuclease III family. In terms of assembly, homodimer. Mg(2+) serves as cofactor.

The protein localises to the cytoplasm. It catalyses the reaction Endonucleolytic cleavage to 5'-phosphomonoester.. In terms of biological role, digests double-stranded RNA. Involved in the processing of primary rRNA transcript to yield the immediate precursors to the large and small rRNAs (23S and 16S). Processes some mRNAs, and tRNAs when they are encoded in the rRNA operon. Processes pre-crRNA and tracrRNA of type II CRISPR loci if present in the organism. The polypeptide is Ribonuclease 3 (Shewanella baltica (strain OS185)).